A 340-amino-acid polypeptide reads, in one-letter code: Phenylalanine--tRNA ligase alpha subunit (340 aa).

Residue Glu255 participates in Mg(2+) binding.

It belongs to the class-II aminoacyl-tRNA synthetase family. Phe-tRNA synthetase alpha subunit type 1 subfamily. As to quaternary structure, tetramer of two alpha and two beta subunits. Requires Mg(2+) as cofactor.

It localises to the cytoplasm. The catalysed reaction is tRNA(Phe) + L-phenylalanine + ATP = L-phenylalanyl-tRNA(Phe) + AMP + diphosphate + H(+). The chain is Phenylalanine--tRNA ligase alpha subunit from Moorella thermoacetica (strain ATCC 39073 / JCM 9320).